Consider the following 592-residue polypeptide: Anaphase-promoting complex subunit 8 (592 aa).

8 TPR repeats span residues 66–99, 160–193, 291–324, 359–392, 393–426, 428–460, 461–494, and 496–528; these read EYYK…QLPI, QQQQ…NKKD, TYIL…EPNR, PETC…NDRY, LSAW…NPRD, RAWY…RPYD, PRMW…YDRE, and VAIN…CDQE. The segment at 129 to 166 is disordered; sequence QQQAQQQAQQAQQESQQNDKNNDTNNNNKTDQQQQQQQ.

This sequence belongs to the APC8/CDC23 family. The APC/C is composed of at least 13 subunits that stay tightly associated throughout the cell cycle: anapc1, anapc2, anapc3, anapc4, anapc5, anapc6, anapc7, anapc8, anapc10, anapc11, cdc20, cdc26 and cdh1.

It is found in the nucleus. Its pathway is protein modification; protein ubiquitination. Its function is as follows. Component of the anaphase promoting complex/cyclosome (APC/C), a cell cycle-regulated E3 ubiquitin-protein ligase complex that controls progression through mitosis and the G1 phase of the cell cycle. The protein is Anaphase-promoting complex subunit 8 (anapc8) of Dictyostelium discoideum (Social amoeba).